Reading from the N-terminus, the 956-residue chain is DNA ligase 4 (956 aa).

Residues glutamate 307, lysine 309, isoleucine 310, arginine 314, glutamate 371, phenylalanine 409, glutamate 476, lysine 481, lysine 498, and lysine 500 each contribute to the ATP site. Lysine 309 (N6-AMP-lysine intermediate) is an active-site residue. Glutamate 371 contributes to the Mg(2+) binding site. Glutamate 476 serves as a coordination point for Mg(2+). Residues 666–700 (LEDRKRRNAGPGRGAKRLKLANVSSDEDELGTDER) are disordered. BRCT domains lie at 700–793 (RPTS…PRNL) and 857–956 (PKGM…DYPL).

It belongs to the ATP-dependent DNA ligase family. The cofactor is Mg(2+).

The protein resides in the nucleus. It carries out the reaction ATP + (deoxyribonucleotide)n-3'-hydroxyl + 5'-phospho-(deoxyribonucleotide)m = (deoxyribonucleotide)n+m + AMP + diphosphate.. In terms of biological role, DNA ligase involved in DNA non-homologous end joining (NHEJ); required for double-strand break (DSB) repair. The sequence is that of DNA ligase 4 (LIG4) from Yarrowia lipolytica (strain CLIB 122 / E 150) (Yeast).